The sequence spans 409 residues: LL-diaminopimelate aminotransferase (409 aa).

Positions 15 and 42 each coordinate substrate. Pyridoxal 5'-phosphate is bound by residues tyrosine 72, 108-109 (SK), tyrosine 132, asparagine 187, tyrosine 218, and 246-248 (SFS). Substrate-binding residues include lysine 109, tyrosine 132, and asparagine 187. Lysine 249 carries the N6-(pyridoxal phosphate)lysine modification. Pyridoxal 5'-phosphate-binding residues include arginine 257 and asparagine 292. Residues asparagine 292 and arginine 388 each contribute to the substrate site.

The protein belongs to the class-I pyridoxal-phosphate-dependent aminotransferase family. LL-diaminopimelate aminotransferase subfamily. As to quaternary structure, homodimer. The cofactor is pyridoxal 5'-phosphate.

It catalyses the reaction (2S,6S)-2,6-diaminopimelate + 2-oxoglutarate = (S)-2,3,4,5-tetrahydrodipicolinate + L-glutamate + H2O + H(+). It participates in amino-acid biosynthesis; L-lysine biosynthesis via DAP pathway; LL-2,6-diaminopimelate from (S)-tetrahydrodipicolinate (aminotransferase route): step 1/1. In terms of biological role, involved in the synthesis of meso-diaminopimelate (m-DAP or DL-DAP), required for both lysine and peptidoglycan biosynthesis. Catalyzes the direct conversion of tetrahydrodipicolinate to LL-diaminopimelate. This is LL-diaminopimelate aminotransferase from Acaryochloris marina (strain MBIC 11017).